A 322-amino-acid polypeptide reads, in one-letter code: Ribosomal RNA large subunit methyltransferase F (322 aa).

Belongs to the methyltransferase superfamily. METTL16/RlmF family.

The protein localises to the cytoplasm. It catalyses the reaction adenosine(1618) in 23S rRNA + S-adenosyl-L-methionine = N(6)-methyladenosine(1618) in 23S rRNA + S-adenosyl-L-homocysteine + H(+). Its function is as follows. Specifically methylates the adenine in position 1618 of 23S rRNA. This chain is Ribosomal RNA large subunit methyltransferase F, found in Cytophaga hutchinsonii (strain ATCC 33406 / DSM 1761 / CIP 103989 / NBRC 15051 / NCIMB 9469 / D465).